A 119-amino-acid polypeptide reads, in one-letter code: Beta-2-microglobulin (119 aa).

Residues 1–20 (MARLVVVALLVLLCLSGLEA) form the signal peptide. Positions 25 to 114 (PKIQVYSRHP…VTFTAPKTVK (90 aa)) constitute an Ig-like C1-type domain. A disulfide bridge links cysteine 45 with cysteine 100.

It belongs to the beta-2-microglobulin family. In terms of assembly, heterodimer of an alpha chain and a beta chain. Beta-2-microglobulin is the beta-chain of major histocompatibility complex class I molecules.

The protein resides in the secreted. Its function is as follows. Component of the class I major histocompatibility complex (MHC). Involved in the presentation of peptide antigens to the immune system. This Chiropotes satanas (Brown-bearded saki) protein is Beta-2-microglobulin (B2M).